Consider the following 543-residue polypeptide: Glucose-6-phosphate isomerase (543 aa).

Residue Glu353 is the Proton donor of the active site. Catalysis depends on residues His384 and Lys512.

Belongs to the GPI family.

Its subcellular location is the cytoplasm. The enzyme catalyses alpha-D-glucose 6-phosphate = beta-D-fructose 6-phosphate. The protein operates within carbohydrate biosynthesis; gluconeogenesis. It functions in the pathway carbohydrate degradation; glycolysis; D-glyceraldehyde 3-phosphate and glycerone phosphate from D-glucose: step 2/4. In terms of biological role, catalyzes the reversible isomerization of glucose-6-phosphate to fructose-6-phosphate. In Christiangramia forsetii (strain DSM 17595 / CGMCC 1.15422 / KT0803) (Gramella forsetii), this protein is Glucose-6-phosphate isomerase.